Consider the following 83-residue polypeptide: Retinal cone rhodopsin-sensitive cGMP 3',5'-cyclic phosphodiesterase subunit gamma (83 aa).

A disordered region spans residues Met1–Pro51. Residues Gly22 to Val43 are compositionally biased toward basic residues.

The protein belongs to the rod/cone cGMP-PDE gamma subunit family. In terms of assembly, tetramer composed of two catalytic chains (alpha and beta), and two inhibitory chains (gamma).

It catalyses the reaction 3',5'-cyclic GMP + H2O = GMP + H(+). Functionally, participates in processes of transmission and amplification of the visual signal. cGMP-PDEs are the effector molecules in G-protein-mediated phototransduction in vertebrate rods and cones. The sequence is that of Retinal cone rhodopsin-sensitive cGMP 3',5'-cyclic phosphodiesterase subunit gamma (Pde6h) from Rattus norvegicus (Rat).